A 134-amino-acid chain; its full sequence is Postmeiotic segregation increased 2-like protein 5 (134 aa).

The protein belongs to the DNA mismatch repair MutL/HexB family.

In Homo sapiens (Human), this protein is Postmeiotic segregation increased 2-like protein 5 (PMS2P5).